The primary structure comprises 193 residues: Peptidyl-tRNA hydrolase (193 aa).

Residue Tyr-16 coordinates tRNA. Catalysis depends on His-21, which acts as the Proton acceptor. The tRNA site is built by Phe-66, Asn-68, and Asn-114.

This sequence belongs to the PTH family. In terms of assembly, monomer.

Its subcellular location is the cytoplasm. It carries out the reaction an N-acyl-L-alpha-aminoacyl-tRNA + H2O = an N-acyl-L-amino acid + a tRNA + H(+). Its function is as follows. Hydrolyzes ribosome-free peptidyl-tRNAs (with 1 or more amino acids incorporated), which drop off the ribosome during protein synthesis, or as a result of ribosome stalling. In terms of biological role, catalyzes the release of premature peptidyl moieties from peptidyl-tRNA molecules trapped in stalled 50S ribosomal subunits, and thus maintains levels of free tRNAs and 50S ribosomes. The chain is Peptidyl-tRNA hydrolase from Pelobacter propionicus (strain DSM 2379 / NBRC 103807 / OttBd1).